The primary structure comprises 115 residues: Large ribosomal subunit protein bL19 (115 aa).

It belongs to the bacterial ribosomal protein bL19 family.

Its function is as follows. This protein is located at the 30S-50S ribosomal subunit interface and may play a role in the structure and function of the aminoacyl-tRNA binding site. This chain is Large ribosomal subunit protein bL19, found in Lacticaseibacillus casei (strain BL23) (Lactobacillus casei).